The chain runs to 148 residues: Lysozyme C (148 aa).

Positions 1-18 are cleaved as a signal peptide; it reads MKAVIILGLVLLSVTVQG. In terms of domain architecture, C-type lysozyme spans 19–148; it reads KIFERCELAR…VSQYVQGCGV (130 aa). Disulfide bonds link cysteine 24–cysteine 146, cysteine 48–cysteine 134, cysteine 83–cysteine 99, and cysteine 95–cysteine 113. Active-site residues include glutamate 53 and aspartate 71.

Belongs to the glycosyl hydrolase 22 family. In terms of assembly, monomer.

It carries out the reaction Hydrolysis of (1-&gt;4)-beta-linkages between N-acetylmuramic acid and N-acetyl-D-glucosamine residues in a peptidoglycan and between N-acetyl-D-glucosamine residues in chitodextrins.. Lysozymes have primarily a bacteriolytic function; those in tissues and body fluids are associated with the monocyte-macrophage system and enhance the activity of immunoagents. The protein is Lysozyme C (LYZ) of Allenopithecus nigroviridis (Allen's swamp monkey).